A 1415-amino-acid chain; its full sequence is Major viral transcription factor ICP4 homolog (1415 aa).

4 disordered regions span residues 48-272 (MDDD…SSSG), 454-480 (DNSSETEKGISSKPSTSPSVLITTSTQ), 691-935 (LLND…PSCY), and 1371-1415 (QHEE…TFTD). Residues 96-105 (PRLTTPSSGR) show a composition bias toward polar residues. Positions 125 to 187 (PETSPSNEHI…LSSPSSSRSP (63 aa)) are enriched in low complexity. Positions 245–255 (GGGRPRGRPPK) are enriched in basic residues. 2 stretches are compositionally biased toward polar residues: residues 263–272 (NDIQVTSSSG) and 465–480 (SKPSTSPSVLITTSTQ). A compositionally biased stretch (low complexity) spans 724–738 (STSSSQSASDKSPIK). Composition is skewed to polar residues over residues 814 to 837 (KAQTDETLPETSTAHPSAMDQSSS) and 895 to 910 (VGQTLLDPTTTTHDIL). Residues 911–933 (SSSLPNRSCSSSPSPSKRPYHPS) show a composition bias toward low complexity.

It belongs to the herpesviridae ICP4 family. A long stretch of serine residues may be a major site of phosphorylation.

It localises to the host nucleus. In terms of biological role, this IE protein is a multifunctional protein capable of migrating to the nucleus, binding to DNA, trans-activating other viral genes, and autoregulating its own synthesis. It is required for the switch from immediate-early to early mode of gene expression. The chain is Major viral transcription factor ICP4 homolog (ICP4) from Gallus gallus (Chicken).